A 399-amino-acid chain; its full sequence is Probable tRNA sulfurtransferase (399 aa).

In terms of domain architecture, THUMP spans 60 to 165 (YAVMERLKRV…TEGTYISCET (106 aa)). Residues 183-184 (LL), 208-209 (HF), Arg-265, Gly-287, and Gln-296 each bind ATP.

The protein belongs to the ThiI family.

The protein resides in the cytoplasm. It catalyses the reaction [ThiI sulfur-carrier protein]-S-sulfanyl-L-cysteine + a uridine in tRNA + 2 reduced [2Fe-2S]-[ferredoxin] + ATP + H(+) = [ThiI sulfur-carrier protein]-L-cysteine + a 4-thiouridine in tRNA + 2 oxidized [2Fe-2S]-[ferredoxin] + AMP + diphosphate. The enzyme catalyses [ThiS sulfur-carrier protein]-C-terminal Gly-Gly-AMP + S-sulfanyl-L-cysteinyl-[cysteine desulfurase] + AH2 = [ThiS sulfur-carrier protein]-C-terminal-Gly-aminoethanethioate + L-cysteinyl-[cysteine desulfurase] + A + AMP + 2 H(+). The protein operates within cofactor biosynthesis; thiamine diphosphate biosynthesis. Its function is as follows. Catalyzes the ATP-dependent transfer of a sulfur to tRNA to produce 4-thiouridine in position 8 of tRNAs, which functions as a near-UV photosensor. Also catalyzes the transfer of sulfur to the sulfur carrier protein ThiS, forming ThiS-thiocarboxylate. This is a step in the synthesis of thiazole, in the thiamine biosynthesis pathway. The sulfur is donated as persulfide by IscS. This is Probable tRNA sulfurtransferase from Brevibacillus brevis (strain 47 / JCM 6285 / NBRC 100599).